We begin with the raw amino-acid sequence, 178 residues long: MINTQTLARPYAKAAFEFASAAGQTDSWSKMLNLAAVAVEVPEVAALLNDPRLTSESKVQALVRVLGDDADEAFRNYVQTLGENDRLSVLPTVWELYEDIKAQAEKTLEAEVETAFELSNAQLQTLAAALSKRLDRTVNLQQVVNPALIGGVLIRAGDVVVDGSVRGKLSQLAESLKS.

Belongs to the ATPase delta chain family. F-type ATPases have 2 components, F(1) - the catalytic core - and F(0) - the membrane proton channel. F(1) has five subunits: alpha(3), beta(3), gamma(1), delta(1), epsilon(1). F(0) has three main subunits: a(1), b(2) and c(10-14). The alpha and beta chains form an alternating ring which encloses part of the gamma chain. F(1) is attached to F(0) by a central stalk formed by the gamma and epsilon chains, while a peripheral stalk is formed by the delta and b chains.

The protein resides in the cell inner membrane. F(1)F(0) ATP synthase produces ATP from ADP in the presence of a proton or sodium gradient. F-type ATPases consist of two structural domains, F(1) containing the extramembraneous catalytic core and F(0) containing the membrane proton channel, linked together by a central stalk and a peripheral stalk. During catalysis, ATP synthesis in the catalytic domain of F(1) is coupled via a rotary mechanism of the central stalk subunits to proton translocation. In terms of biological role, this protein is part of the stalk that links CF(0) to CF(1). It either transmits conformational changes from CF(0) to CF(1) or is implicated in proton conduction. This Stutzerimonas stutzeri (strain A1501) (Pseudomonas stutzeri) protein is ATP synthase subunit delta.